The following is a 373-amino-acid chain: Methionine import ATP-binding protein MetN 1 (373 aa).

The ABC transporter domain occupies 29-270 (ILIDRVRKVY…PRHEVTRRFV (242 aa)). Residue 67–74 (GRSGAGKS) participates in ATP binding.

This sequence belongs to the ABC transporter superfamily. Methionine importer (TC 3.A.1.24) family. In terms of assembly, the complex is composed of two ATP-binding proteins (MetN), two transmembrane proteins (MetI) and a solute-binding protein (MetQ).

The protein localises to the cell inner membrane. It carries out the reaction L-methionine(out) + ATP + H2O = L-methionine(in) + ADP + phosphate + H(+). It catalyses the reaction D-methionine(out) + ATP + H2O = D-methionine(in) + ADP + phosphate + H(+). Part of the ABC transporter complex MetNIQ involved in methionine import. Responsible for energy coupling to the transport system. The protein is Methionine import ATP-binding protein MetN 1 of Rhodopseudomonas palustris (strain ATCC BAA-98 / CGA009).